Here is a 1481-residue protein sequence, read N- to C-terminus: Protein shortage in chiasmata 1 ortholog (1481 aa).

Disordered stretches follow at residues 479–498 and 512–560; these read TDVH…EKEV and KSKV…IQAS. The segment covering 513–531 has biased composition (basic and acidic residues); it reads SKVEANPKNDQEPEARIMQ. The span at 543–560 shows a compositional bias: low complexity; the sequence is SSQVPSAESASSSQIQAS.

This sequence belongs to the XPF family. Highly divergent. Interacts with TEX11. Interacts with SPO16. In terms of tissue distribution, mainly expressed in adult testis.

It is found in the chromosome. In terms of biological role, ATPase required during meiosis for the formation of crossover recombination intermediates. Binds DNA: preferentially binds to single-stranded DNA and DNA branched structures. Does not show nuclease activity in vitro, but shows ATPase activity, which is stimulated by the presence of single-stranded DNA. Plays a key role in homologous recombination and crossing-over in meiotic prophase I in male and female germ cells. Required for proper synaptonemal complex assembly and homologous chromosome pairing. Required for recruitment of TEX11 and MSH4 to recombination intermediates. This Mus musculus (Mouse) protein is Protein shortage in chiasmata 1 ortholog.